A 234-amino-acid chain; its full sequence is Large ribosomal subunit protein uL1 (234 aa).

The protein belongs to the universal ribosomal protein uL1 family. Part of the 50S ribosomal subunit.

Binds directly to 23S rRNA. The L1 stalk is quite mobile in the ribosome, and is involved in E site tRNA release. Its function is as follows. Protein L1 is also a translational repressor protein, it controls the translation of the L11 operon by binding to its mRNA. In Yersinia enterocolitica serotype O:8 / biotype 1B (strain NCTC 13174 / 8081), this protein is Large ribosomal subunit protein uL1.